A 274-amino-acid polypeptide reads, in one-letter code: Acetylaranotin bis-thiomethyltransferase (274 aa).

This sequence belongs to the class I-like SAM-binding methyltransferase superfamily.

It participates in mycotoxin biosynthesis. Its function is as follows. Acetylaranotin bis-thiomethyltransferase involved in the biosynthesis of acetylaranotin derivatives, members of the epipolythiodioxopiperazine (ETP) class of toxins characterized by a disulfide-bridged cyclic dipeptide. The first step of acetylaranotin biosynthesis is performed by the NRPS ataP which produces diketopiperazine cyclo-L-Phe-L-Phe via the condensation of 2 phenylalanines (L-Phe). The ataC domain of ataTC then catalyzes the formation of bishydroxylation of cyclo-L-Phe-L-Phe. The glutathione S-transferase domain ataG in ataIMG further catalyzes the conjugation of two glutathiones to the bishydroxylated intermediate. Next, the dipeptidase ataJ removes the Glu residues. The following step is performed by the carbon sulfur lyase domain ataI of ataIMG which may convert the bis-cysteinyl adduct to yield an epidithiol intermediate. The ataT domain from ataTC then catalyzes the oxidation of the free dithiols, followed by a cyclization step catalyzed by the cytochrome P450 ataF. AtaF probably acts as an epoxidase to promote a dual epoxidation formation at C8 and C9 along with C8' and C9', followed by the spontaneous nucleophilic attack of the amide nitrogens N10 and N10' to yield an intermediate with the pyrrolidine partial structure. The final steps of acetylaranotin biosynthesis involve the acetylation and ring rearrangement of an epitetrathiodiketopiperazine intermediate to produce acetylaranotin. AtaH probably catalyzes the acetylation of epitetrathiodiketopiperazine to produce a diacetate and ataY is responsible for the formation of the dihydrooxepin moiety that converts the diacetate intermediate to acetylaranotin via acetylapoaranotin. Both enzymes could function independently in the absence of the other. The acetylaranotin bis-thiomethyltransferase ataS located outside of acetylaranotin gene cluster is the main thiomethyltransferase responsible for converting acetylaranotin and its related intermediates to their methylated forms. The chain is Acetylaranotin bis-thiomethyltransferase from Aspergillus terreus (strain NIH 2624 / FGSC A1156).